The chain runs to 242 residues: Orotidine 5'-phosphate decarboxylase (242 aa).

Substrate is bound by residues Asp-16, Lys-37, 64–73 (DLKFHDIPNT), Thr-128, Arg-190, Gln-199, Gly-219, and Arg-220. Lys-66 (proton donor) is an active-site residue.

The protein belongs to the OMP decarboxylase family. Type 1 subfamily. Homodimer.

It catalyses the reaction orotidine 5'-phosphate + H(+) = UMP + CO2. It participates in pyrimidine metabolism; UMP biosynthesis via de novo pathway; UMP from orotate: step 2/2. In terms of biological role, catalyzes the decarboxylation of orotidine 5'-monophosphate (OMP) to uridine 5'-monophosphate (UMP). In Prochlorococcus marinus (strain MIT 9312), this protein is Orotidine 5'-phosphate decarboxylase.